We begin with the raw amino-acid sequence, 273 residues long: Homeobox protein Hox-C13b (273 aa).

A DNA-binding region (homeobox) is located at residues 201–260 (GRKKRVPYTKIQLKELEKEYAASKFITKDRRRRISATTSLSERQVTIWFQNRRVKEKKFV).

The protein belongs to the Abd-B homeobox family.

The protein resides in the nucleus. Sequence-specific transcription factor which is part of a developmental regulatory system that provides cells with specific positional identities on the anterior-posterior axis. Plays a role in early embryonic development. The protein is Homeobox protein Hox-C13b (hoxc13b) of Danio rerio (Zebrafish).